The chain runs to 259 residues: Thiazole synthase (259 aa).

Lys-99 serves as the catalytic Schiff-base intermediate with DXP. Residues Gly-161, 187-188 (AG), and 209-210 (NT) contribute to the 1-deoxy-D-xylulose 5-phosphate site.

The protein belongs to the ThiG family. In terms of assembly, homotetramer. Forms heterodimers with either ThiH or ThiS.

It is found in the cytoplasm. It catalyses the reaction [ThiS sulfur-carrier protein]-C-terminal-Gly-aminoethanethioate + 2-iminoacetate + 1-deoxy-D-xylulose 5-phosphate = [ThiS sulfur-carrier protein]-C-terminal Gly-Gly + 2-[(2R,5Z)-2-carboxy-4-methylthiazol-5(2H)-ylidene]ethyl phosphate + 2 H2O + H(+). The protein operates within cofactor biosynthesis; thiamine diphosphate biosynthesis. Functionally, catalyzes the rearrangement of 1-deoxy-D-xylulose 5-phosphate (DXP) to produce the thiazole phosphate moiety of thiamine. Sulfur is provided by the thiocarboxylate moiety of the carrier protein ThiS. In vitro, sulfur can be provided by H(2)S. The protein is Thiazole synthase of Nitratiruptor sp. (strain SB155-2).